The chain runs to 322 residues: GRB2-related adaptor protein 2 (322 aa).

Positions 1-56 (MEATAKFDFMASGEDELSFRTGDILKILSNQEEWLKAELGSQEGYVPKNFIDIEFP) constitute an SH3 1 domain. Tyr45 carries the phosphotyrosine modification. An SH2 domain is found at 58 to 149 (WFHEGLSRHQ…QKQVFLRDGT (92 aa)). Position 106 is an N6-acetyllysine (Lys106). The tract at residues 143–216 (VFLRDGTQDQ…TPGPQPPQQQ (74 aa)) is disordered. Positions 148-163 (GTQDQGHRGNSLDRRS) are enriched in basic and acidic residues. Ser186 carries the post-translational modification Phosphoserine. Over residues 193–204 (PQQFHPHQQPSP) the composition is skewed to low complexity. A Phosphoserine modification is found at Ser230. Thr254 is subject to Phosphothreonine. Positions 263-322 (GRVRWARALYDFEALEEDELGFRSGEVVEVLDSSNPSWWTGRLHNKLGLFPANYVAPMMR) constitute an SH3 2 domain.

Belongs to the GRB2/sem-5/DRK family. Interacts with phosphorylated LAT and LAX1 upon TCR activation. Interacts with SHB. Interacts with PTPN23. Interacts with phosphorylated LIME1 upon TCR activation.

The protein resides in the nucleus. It localises to the cytoplasm. Its subcellular location is the endosome. Functionally, interacts with SLP-76 to regulate NF-AT activation. Binds to tyrosine-phosphorylated shc. In Mus musculus (Mouse), this protein is GRB2-related adaptor protein 2 (Grap2).